Consider the following 61-residue polypeptide: MNNYTKDDDGRLNNFAVEPKIYAADAPSKADKRNYLIMAAITVVLVAGLIAVAVVASGAST.

A helical transmembrane segment spans residues 36–56; it reads LIMAAITVVLVAGLIAVAVVA.

This sequence belongs to the Psb34 family. As to quaternary structure, part of the photosystem II (PSII) assembly intermediate RC47 complex (with D1, D2, CP47, PsbE, PsbF, PsbH, Psb27 and Psb28); minor amounts are found in other PSII complexes, including mature, dimeric PSII with PsbO and PsbV. No HliA or HliB are detected in any of these complexes. Its interaction with PSII requires both CP47 (psbB) and PsbH. HliA/HliB and Psb34 probably bind to a similar site on CP47; their binding seems to be mutually exclusive.

It localises to the cellular thylakoid membrane. Involved in photosystem II (PSII) assembly and/or repair. Probably involved in conversion of late PSII assembly intermediates into mature dimeric PSII, it may mediate the optimal equlibrium of HliA/HliB among the intermediates containing CP47 (psbB) to facilitate photoprotection during assembly. In Synechocystis sp. (strain ATCC 27184 / PCC 6803 / Kazusa), this protein is Photosystem II assembly protein Psb34.